We begin with the raw amino-acid sequence, 125 residues long: Ixonnexin (125 aa).

The signal sequence occupies residues 1–21 (MGLTGTTLVLVCVAFFGSAAA). Asn-26 carries N-linked (GlcNAc...) asparagine glycosylation. The tract at residues 81-125 (TSSGGPDDTGDNTPPPTEKPKQKKKKPKKTKKPKRKSKKDQKENF) is disordered. A compositionally biased stretch (basic residues) spans 101-119 (KQKKKKPKKTKKPKRKSKK).

This sequence belongs to the salp14 family. In terms of assembly, homodimer. Interacts with host PLG. Interacts with host PLAT. Saliva (at protein level).

The protein localises to the secreted. Its function is as follows. Salivary protein that promotes host fibrinolysis via accelerating host plasmin generation from plasminogen (PLG) initiated by tPA/tissue-type plasminogen activator (PLAT). Does not affect urokinase (PLAU)-mediated fibrinolysis in the host. Enhances amidolytic activity of host coagulation factor Xa (F10). This chain is Ixonnexin, found in Ixodes scapularis (Black-legged tick).